The sequence spans 185 residues: uncharacterized protein (185 aa).

This is an uncharacterized protein from Alkalihalophilus pseudofirmus (strain ATCC BAA-2126 / JCM 17055 / OF4) (Bacillus pseudofirmus).